A 1007-amino-acid polypeptide reads, in one-letter code: Integrator complex subunit 8 (1007 aa).

A WFEF motif motif is present at residues 19-24 (WFEFLL). The span at 56 to 78 (TAQESVGTPGSDLQNLNQTPSNS) shows a compositional bias: polar residues. Positions 56-112 (TAQESVGTPGSDLQNLNQTPSNSGPIPGVVGGAPAPTTPTASGGVGMPHSPQRPAEK) are disordered. A compositionally biased stretch (low complexity) spans 79–97 (GPIPGVVGGAPAPTTPTAS).

The protein belongs to the Integrator subunit 8 family. As to quaternary structure, belongs to the multiprotein complex Integrator, at least composed of IntS1, IntS2, IntS3, IntS4, omd/IntS5, IntS6, defl/IntS7, IntS8, IntS9, IntS10, IntS11, IntS12, asun/IntS13, IntS14 and IntS15. The core complex associates with protein phosphatase 2A subunits mts/PP2A and Pp2A-29B, to form the Integrator-PP2A (INTAC) complex.

It is found in the nucleus. The protein localises to the chromosome. Its function is as follows. Component of the integrator complex, a multiprotein complex that terminates RNA polymerase II (Pol II) transcription in the promoter-proximal region of genes. The integrator complex provides a quality checkpoint during transcription elongation by driving premature transcription termination of transcripts that are unfavorably configured for transcriptional elongation: the complex terminates transcription by (1) catalyzing dephosphorylation of the C-terminal domain (CTD) of Pol II subunit Polr2A/Rbp1 and Spt5, and (2) degrading the exiting nascent RNA transcript via endonuclease activity. The integrator complex is also involved in the 3'-end processing of the U7 snRNA, and also the spliceosomal snRNAs U1, U2, U4 and U5. Within the integrator complex, INTS8 is required for the recruitment of protein phosphatase 2A (PP2A) to transcription pause-release checkpoint. In Drosophila melanogaster (Fruit fly), this protein is Integrator complex subunit 8.